The primary structure comprises 124 residues: UPF0102 protein PP_1324 (124 aa).

It belongs to the UPF0102 family.

The sequence is that of UPF0102 protein PP_1324 from Pseudomonas putida (strain ATCC 47054 / DSM 6125 / CFBP 8728 / NCIMB 11950 / KT2440).